A 64-amino-acid chain; its full sequence is Large ribosomal subunit protein bL35 (64 aa).

This sequence belongs to the bacterial ribosomal protein bL35 family.

The sequence is that of Large ribosomal subunit protein bL35 from Vibrio vulnificus (strain CMCP6).